Here is a 364-residue protein sequence, read N- to C-terminus: Dihydroorotate dehydrogenase (quinone) (364 aa).

FMN is bound by residues 78–82 and T102; that span reads AGFDK. K82 provides a ligand contact to substrate. 127-131 provides a ligand contact to substrate; that stretch reads NRMGF. 2 residues coordinate FMN: N156 and N189. N189 serves as a coordination point for substrate. The active-site Nucleophile is S192. N194 is a binding site for substrate. Positions 227 and 255 each coordinate FMN. Substrate is bound at residue 256 to 257; sequence NT. Residues G285, G314, and 335-336 contribute to the FMN site; that span reads YT.

It belongs to the dihydroorotate dehydrogenase family. Type 2 subfamily. As to quaternary structure, monomer. FMN is required as a cofactor.

The protein localises to the cell membrane. It carries out the reaction (S)-dihydroorotate + a quinone = orotate + a quinol. Its pathway is pyrimidine metabolism; UMP biosynthesis via de novo pathway; orotate from (S)-dihydroorotate (quinone route): step 1/1. In terms of biological role, catalyzes the conversion of dihydroorotate to orotate with quinone as electron acceptor. This is Dihydroorotate dehydrogenase (quinone) from Thermosynechococcus vestitus (strain NIES-2133 / IAM M-273 / BP-1).